We begin with the raw amino-acid sequence, 330 residues long: 4-hydroxythreonine-4-phosphate dehydrogenase (330 aa).

Substrate is bound at residue Thr133. Positions 161, 206, and 261 each coordinate a divalent metal cation. 3 residues coordinate substrate: Lys269, Asn278, and Arg287.

The protein belongs to the PdxA family. Homodimer. The cofactor is Zn(2+). Requires Mg(2+) as cofactor. It depends on Co(2+) as a cofactor.

The protein resides in the cytoplasm. The catalysed reaction is 4-(phosphooxy)-L-threonine + NAD(+) = 3-amino-2-oxopropyl phosphate + CO2 + NADH. Its pathway is cofactor biosynthesis; pyridoxine 5'-phosphate biosynthesis; pyridoxine 5'-phosphate from D-erythrose 4-phosphate: step 4/5. Catalyzes the NAD(P)-dependent oxidation of 4-(phosphooxy)-L-threonine (HTP) into 2-amino-3-oxo-4-(phosphooxy)butyric acid which spontaneously decarboxylates to form 3-amino-2-oxopropyl phosphate (AHAP). The polypeptide is 4-hydroxythreonine-4-phosphate dehydrogenase (Xylella fastidiosa (strain Temecula1 / ATCC 700964)).